A 467-amino-acid chain; its full sequence is D-hydantoinase (467 aa).

Positions 65, 67, and 156 each coordinate Zn(2+). N6-carboxylysine is present on Lys156. Residue Tyr161 participates in substrate binding. The Zn(2+) site is built by His189 and His245. Residue Ser294 coordinates substrate. Asp321 provides a ligand contact to Zn(2+). Asn343 lines the substrate pocket.

The protein belongs to the metallo-dependent hydrolases superfamily. Hydantoinase/dihydropyrimidinase family. As to quaternary structure, homotetramer. Zn(2+) is required as a cofactor. In terms of processing, carboxylation allows a single lysine to coordinate two zinc ions.

Its function is as follows. Catalyzes the stereospecific hydrolysis of the cyclic amide bond of D-hydantoin derivatives. The polypeptide is D-hydantoinase (hyuA) (Streptomyces coelicolor (strain ATCC BAA-471 / A3(2) / M145)).